A 138-amino-acid chain; its full sequence is Cysteine desulfuration protein SufE (138 aa).

Cys51 (cysteine persulfide intermediate) is an active-site residue.

Belongs to the SufE family. As to quaternary structure, homodimer. Interacts with SufS.

The protein resides in the cytoplasm. Its pathway is cofactor biosynthesis; iron-sulfur cluster biosynthesis. Functionally, participates in cysteine desulfuration mediated by SufS. Cysteine desulfuration mobilizes sulfur from L-cysteine to yield L-alanine and constitutes an essential step in sulfur metabolism for biosynthesis of a variety of sulfur-containing biomolecules. Functions as a sulfur acceptor for SufS, by mediating the direct transfer of the sulfur atom from the S-sulfanylcysteine of SufS, an intermediate product of cysteine desulfuration process. The sequence is that of Cysteine desulfuration protein SufE from Klebsiella pneumoniae subsp. pneumoniae (strain ATCC 700721 / MGH 78578).